A 673-amino-acid polypeptide reads, in one-letter code: MTDSIKLEIEQLRQTLRYHEYQYHVLDNPQIPDAEYDRLFHRLKTLEQQYPQWFSPDSPTQRVGAKPLSAFAQVQHEMPMLSLDNAFSDEELHAFVKRIQDRLVFSPKLLEFCCEPKLDGLAVSILYVDGKLTQAATRGDGSTGEDITLNIRTVRNIPLQLLMENPPTRLEVRGEVFMSQAGFEVLNEKALARGEKTFANPRNAAAGSLRQLDPRITSQRPLLLNAYSIGVAEGIDLPDTHFERLQWLKSIGIPVNNEIQLCEGTENVLNFYRAIMQKRSTLGYDIDGTVIKVNDIALQEELGFISKAPRWAIAYKFPAQEELTVLNAVEFQVGRTGAITPVAKLQPVFVAGVTVSNATLHNGDEIARLDVAIGDTVIIRRAGDVIPQIIGVLHEKRPANAEKIVFPTECPVCGSVIVRIEGEAVARCTGGLFCAAQRKEALKHFVSRKAMDIDGVGAKLIEQLVDREQIHTPADLFKLDLNTLARLERMGLKSAQNALDSLQKAKKTTLARFIFALGIREVGEATALNLANHFKTLEALKEATLEQLQEVQDVGEVVANRIFVFWREPHNVAVVEDLIAQGIHWETVEVKDVGDNPFKEKTVVLTGTLTQMGRTEAKALLQQLGAKVSGSVSAKTDLVVAGDSAGSKLTKANELGVKVIDENTFLAWSKPYL.

NAD(+) is bound by residues 33 to 37 (DAEYD), 82 to 83 (SL), and Glu-115. Lys-117 acts as the N6-AMP-lysine intermediate in catalysis. NAD(+) is bound by residues Arg-138, Glu-175, Lys-292, and Lys-316. Positions 410, 413, 428, and 434 each coordinate Zn(2+). In terms of domain architecture, BRCT spans 593–673 (VGDNPFKEKT…TFLAWSKPYL (81 aa)).

Belongs to the NAD-dependent DNA ligase family. LigA subfamily. Mg(2+) is required as a cofactor. The cofactor is Mn(2+).

It carries out the reaction NAD(+) + (deoxyribonucleotide)n-3'-hydroxyl + 5'-phospho-(deoxyribonucleotide)m = (deoxyribonucleotide)n+m + AMP + beta-nicotinamide D-nucleotide.. DNA ligase that catalyzes the formation of phosphodiester linkages between 5'-phosphoryl and 3'-hydroxyl groups in double-stranded DNA using NAD as a coenzyme and as the energy source for the reaction. It is essential for DNA replication and repair of damaged DNA. The chain is DNA ligase from Pasteurella multocida (strain Pm70).